The following is a 159-amino-acid chain: 3-hydroxyacyl-[acyl-carrier-protein] dehydratase FabZ (159 aa).

H59 is an active-site residue.

This sequence belongs to the thioester dehydratase family. FabZ subfamily.

It localises to the cytoplasm. The catalysed reaction is a (3R)-hydroxyacyl-[ACP] = a (2E)-enoyl-[ACP] + H2O. Its function is as follows. Involved in unsaturated fatty acids biosynthesis. Catalyzes the dehydration of short chain beta-hydroxyacyl-ACPs and long chain saturated and unsaturated beta-hydroxyacyl-ACPs. This Caulobacter vibrioides (strain ATCC 19089 / CIP 103742 / CB 15) (Caulobacter crescentus) protein is 3-hydroxyacyl-[acyl-carrier-protein] dehydratase FabZ.